The sequence spans 411 residues: Arginine deiminase (411 aa).

The active-site Amidino-cysteine intermediate is the Cys-401.

The protein belongs to the arginine deiminase family.

It localises to the cytoplasm. It carries out the reaction L-arginine + H2O = L-citrulline + NH4(+). The protein operates within amino-acid degradation; L-arginine degradation via ADI pathway; carbamoyl phosphate from L-arginine: step 1/2. In Streptococcus equi subsp. zooepidemicus (strain MGCS10565), this protein is Arginine deiminase.